We begin with the raw amino-acid sequence, 425 residues long: Enolase (425 aa).

Position 162 (Gln-162) interacts with (2R)-2-phosphoglycerate. The Proton donor role is filled by Glu-204. 3 residues coordinate Mg(2+): Asp-241, Glu-284, and Asp-311. Positions 336, 365, 366, and 387 each coordinate (2R)-2-phosphoglycerate. Lys-336 serves as the catalytic Proton acceptor.

It belongs to the enolase family. The cofactor is Mg(2+).

The protein resides in the cytoplasm. Its subcellular location is the secreted. It localises to the cell surface. It catalyses the reaction (2R)-2-phosphoglycerate = phosphoenolpyruvate + H2O. The protein operates within carbohydrate degradation; glycolysis; pyruvate from D-glyceraldehyde 3-phosphate: step 4/5. In terms of biological role, catalyzes the reversible conversion of 2-phosphoglycerate (2-PG) into phosphoenolpyruvate (PEP). It is essential for the degradation of carbohydrates via glycolysis. The polypeptide is Enolase (Brucella ovis (strain ATCC 25840 / 63/290 / NCTC 10512)).